Reading from the N-terminus, the 115-residue chain is NAD(P)H-quinone oxidoreductase subunit M (115 aa).

Belongs to the complex I NdhM subunit family. In terms of assembly, NDH-1 can be composed of about 15 different subunits; different subcomplexes with different compositions have been identified which probably have different functions.

Its subcellular location is the cellular thylakoid membrane. It catalyses the reaction a plastoquinone + NADH + (n+1) H(+)(in) = a plastoquinol + NAD(+) + n H(+)(out). It carries out the reaction a plastoquinone + NADPH + (n+1) H(+)(in) = a plastoquinol + NADP(+) + n H(+)(out). In terms of biological role, NDH-1 shuttles electrons from an unknown electron donor, via FMN and iron-sulfur (Fe-S) centers, to quinones in the respiratory and/or the photosynthetic chain. The immediate electron acceptor for the enzyme in this species is believed to be plastoquinone. Couples the redox reaction to proton translocation, and thus conserves the redox energy in a proton gradient. Cyanobacterial NDH-1 also plays a role in inorganic carbon-concentration. The polypeptide is NAD(P)H-quinone oxidoreductase subunit M (Prochlorococcus marinus subsp. pastoris (strain CCMP1986 / NIES-2087 / MED4)).